We begin with the raw amino-acid sequence, 310 residues long: HPr kinase/phosphorylase (310 aa).

Active-site residues include histidine 138 and lysine 159. 153 to 160 serves as a coordination point for ATP; sequence GDSGIGKS. A Mg(2+)-binding site is contributed by serine 160. The active-site Proton acceptor; for phosphorylation activity. Proton donor; for dephosphorylation activity is aspartate 177. Positions 201–210 are important for the catalytic mechanism of both phosphorylation and dephosphorylation; it reads LEIRGVGIID. A Mg(2+)-binding site is contributed by glutamate 202. Residue arginine 243 is part of the active site. The interval 264–269 is important for the catalytic mechanism of dephosphorylation; that stretch reads PVKTGR.

The protein belongs to the HPrK/P family. In terms of assembly, homohexamer. Mg(2+) serves as cofactor.

The catalysed reaction is [HPr protein]-L-serine + ATP = [HPr protein]-O-phospho-L-serine + ADP + H(+). It catalyses the reaction [HPr protein]-O-phospho-L-serine + phosphate + H(+) = [HPr protein]-L-serine + diphosphate. Its function is as follows. Catalyzes the ATP- as well as the pyrophosphate-dependent phosphorylation of a specific serine residue in HPr, a phosphocarrier protein of the phosphoenolpyruvate-dependent sugar phosphotransferase system (PTS). HprK/P also catalyzes the pyrophosphate-producing, inorganic phosphate-dependent dephosphorylation (phosphorolysis) of seryl-phosphorylated HPr (P-Ser-HPr). The two antagonistic activities of HprK/P are regulated by several intracellular metabolites, which change their concentration in response to the absence or presence of rapidly metabolisable carbon sources (glucose, fructose, etc.) in the growth medium. Therefore, by controlling the phosphorylation state of HPr, HPrK/P is a sensor enzyme that plays a major role in the regulation of carbon metabolism and sugar transport: it mediates carbon catabolite repression (CCR), and regulates PTS-catalyzed carbohydrate uptake and inducer exclusion. This chain is HPr kinase/phosphorylase, found in Streptococcus uberis (strain ATCC BAA-854 / 0140J).